The chain runs to 444 residues: Zeaxanthin 4-ketolase (444 aa).

The segment at 408–444 is disordered; the sequence is VAGGSSSGGGGEGGKPGAGEHGLLQRQRQLAPVGVMA. The segment covering 412-427 has biased composition (gly residues); it reads SSSGGGGEGGKPGAGE.

The enzyme catalyses all-trans-adonixanthin + 2 AH2 + 2 O2 = all-trans-(3S,3'S)-astaxanthin + 2 A + 3 H2O. It carries out the reaction all-trans-zeaxanthin + 2 AH2 + 2 O2 = all-trans-adonixanthin + 2 A + 3 H2O. It catalyses the reaction echinenone + 2 AH2 + 2 O2 = canthaxanthin + 2 A + 3 H2O. The catalysed reaction is all-trans-beta-carotene + 2 AH2 + 2 O2 = echinenone + 2 A + 3 H2O. It participates in carotenoid biosynthesis; astaxanthin biosynthesis. In terms of biological role, involved in the biosynthesis of ketocarotenoids which are powerful anti-oxidative molecules. Catalyzes the conversion of zeaxanthin to astaxanthin via adonixanthin. Catalyzes the conversion of beta-carotene to canthaxanthin via echinenone. This is Zeaxanthin 4-ketolase from Chlamydomonas reinhardtii (Chlamydomonas smithii).